Reading from the N-terminus, the 442-residue chain is 3-isopropylmalate dehydratase large subunit (442 aa).

3 residues coordinate [4Fe-4S] cluster: Cys-347, Cys-407, and Cys-410.

This sequence belongs to the aconitase/IPM isomerase family. LeuC type 1 subfamily. Heterodimer of LeuC and LeuD. It depends on [4Fe-4S] cluster as a cofactor.

It catalyses the reaction (2R,3S)-3-isopropylmalate = (2S)-2-isopropylmalate. It participates in amino-acid biosynthesis; L-leucine biosynthesis; L-leucine from 3-methyl-2-oxobutanoate: step 2/4. Catalyzes the isomerization between 2-isopropylmalate and 3-isopropylmalate, via the formation of 2-isopropylmaleate. The polypeptide is 3-isopropylmalate dehydratase large subunit (Buchnera aphidicola subsp. Uroleucon solidaginis).